Consider the following 382-residue polypeptide: Galactokinase (382 aa).

34-37 is a substrate binding site; sequence EHTD. 124–130 contributes to the ATP binding site; sequence GAGLSSS. Mg(2+) is bound by residues S130 and E162. The Proton acceptor role is filled by D174. A substrate-binding site is contributed by Y223.

The protein belongs to the GHMP kinase family. GalK subfamily.

It localises to the cytoplasm. The catalysed reaction is alpha-D-galactose + ATP = alpha-D-galactose 1-phosphate + ADP + H(+). It participates in carbohydrate metabolism; galactose metabolism. Catalyzes the transfer of the gamma-phosphate of ATP to D-galactose to form alpha-D-galactose-1-phosphate (Gal-1-P). The chain is Galactokinase from Aeromonas hydrophila subsp. hydrophila (strain ATCC 7966 / DSM 30187 / BCRC 13018 / CCUG 14551 / JCM 1027 / KCTC 2358 / NCIMB 9240 / NCTC 8049).